We begin with the raw amino-acid sequence, 316 residues long: Myb-related protein 306 (316 aa).

2 HTH myb-type domains span residues 9-65 and 66-116; these read KIGV…RPGI and KRGD…KKKL. DNA-binding regions (H-T-H motif) lie at residues 37-61 and 89-112; these read WRAI…TNYL and WAAI…NTHL. Disordered regions lie at residues 119-144, 168-193, and 209-230; these read LQSP…SKGQ, KTSS…QAST, and KKSP…TTTS. Positions 135–144 are enriched in basic and acidic residues; it reads DSDKSVSKGQ. Over residues 181-193 the composition is skewed to polar residues; sequence VQTTQPRPFQAST. The segment covering 216-230 has biased composition (low complexity); sequence SSTSQAGSSESTTTS.

In terms of tissue distribution, expressed in flowers, leaves and weakly in seed pods.

It localises to the nucleus. Transcription factor. In Antirrhinum majus (Garden snapdragon), this protein is Myb-related protein 306.